The primary structure comprises 73 residues: Translation initiation factor IF-1 (73 aa).

Residues 1–72 enclose the S1-like domain; that stretch reads MAKEDVIEVE…SRGRITYRYR (72 aa).

This sequence belongs to the IF-1 family. Component of the 30S ribosomal translation pre-initiation complex which assembles on the 30S ribosome in the order IF-2 and IF-3, IF-1 and N-formylmethionyl-tRNA(fMet); mRNA recruitment can occur at any time during PIC assembly.

It localises to the cytoplasm. Functionally, one of the essential components for the initiation of protein synthesis. Stabilizes the binding of IF-2 and IF-3 on the 30S subunit to which N-formylmethionyl-tRNA(fMet) subsequently binds. Helps modulate mRNA selection, yielding the 30S pre-initiation complex (PIC). Upon addition of the 50S ribosomal subunit IF-1, IF-2 and IF-3 are released leaving the mature 70S translation initiation complex. The chain is Translation initiation factor IF-1 from Rubrobacter xylanophilus (strain DSM 9941 / JCM 11954 / NBRC 16129 / PRD-1).